Consider the following 278-residue polypeptide: Large ribosomal subunit protein uL2 (278 aa).

Disordered stretches follow at residues 33–57 (LIRP…KGGG) and 224–278 (VVMN…GKKR). The segment covering 45-57 (AHGRITTRHKGGG) has biased composition (basic residues). The segment covering 253-268 (PEGRTRKPNKASDKLI) has biased composition (basic and acidic residues). Basic residues predominate over residues 269–278 (VRRRRTGKKR).

It belongs to the universal ribosomal protein uL2 family. As to quaternary structure, part of the 50S ribosomal subunit. Forms a bridge to the 30S subunit in the 70S ribosome.

In terms of biological role, one of the primary rRNA binding proteins. Required for association of the 30S and 50S subunits to form the 70S ribosome, for tRNA binding and peptide bond formation. It has been suggested to have peptidyltransferase activity; this is somewhat controversial. Makes several contacts with the 16S rRNA in the 70S ribosome. This chain is Large ribosomal subunit protein uL2, found in Mycobacteroides abscessus (strain ATCC 19977 / DSM 44196 / CCUG 20993 / CIP 104536 / JCM 13569 / NCTC 13031 / TMC 1543 / L948) (Mycobacterium abscessus).